The following is a 240-amino-acid chain: Uridylate kinase (240 aa).

Position 14–17 (14–17 (KLSG)) interacts with ATP. Glycine 56 serves as a coordination point for UMP. 2 residues coordinate ATP: glycine 57 and arginine 61. Residues aspartate 76 and 137-144 (TGNPFFTT) contribute to the UMP site. ATP contacts are provided by threonine 164, tyrosine 170, and aspartate 173.

This sequence belongs to the UMP kinase family. As to quaternary structure, homohexamer.

It is found in the cytoplasm. It carries out the reaction UMP + ATP = UDP + ADP. The protein operates within pyrimidine metabolism; CTP biosynthesis via de novo pathway; UDP from UMP (UMPK route): step 1/1. Inhibited by UTP. Catalyzes the reversible phosphorylation of UMP to UDP. This is Uridylate kinase from Albidiferax ferrireducens (strain ATCC BAA-621 / DSM 15236 / T118) (Rhodoferax ferrireducens).